A 442-amino-acid polypeptide reads, in one-letter code: Chitinase-like protein Idgf4 (442 aa).

A signal peptide spans 1–21 (MKLYALFSLLVGSLAIGQISA). A GH18 domain is found at 25 to 442 (HHLLCYYDGN…PILRQVKSKL (418 aa)). A disulfide bridge links cysteine 29 with cysteine 56. An N-linked (GlcNAc...) asparagine glycan is attached at asparagine 224. An intrachain disulfide couples cysteine 343 to cysteine 426.

It belongs to the glycosyl hydrolase 18 family. IDGF subfamily. In terms of processing, glycosylated. In terms of tissue distribution, primarily expressed in yolk cells and fat body. In larvae, it is expressed in the imaginal ring, the salivary duct, large salivary gland cells and weakly expressed in imaginal disks. More strongly expressed than Idgf1 and Idgf3.

The protein resides in the secreted. Its function is as follows. Cooperates with insulin-like peptides to stimulate the proliferation, polarization and motility of imaginal disk cells. May act by stabilizing the binding of insulin-like peptides to its receptor through a simultaneous interaction with both molecules to form a multiprotein signaling complex. The protein is Chitinase-like protein Idgf4 (Idgf4) of Drosophila melanogaster (Fruit fly).